The following is a 394-amino-acid chain: uncharacterized protein (394 aa).

Transmembrane regions (helical) follow at residues 10 to 30, 50 to 70, 79 to 99, 100 to 120, 138 to 158, 166 to 186, 218 to 238, 243 to 263, 291 to 311, 337 to 357, and 364 to 384; these read PALI…NYYA, FIVT…VPLG, IVSM…SQSL, AMMI…QILV, TIMS…GLLA, VFWV…RGLP, LLGC…AFLL, FNYS…GALG, WLAI…ILVL, LTAG…LISA, and GWAG…LVWW.

It belongs to the major facilitator superfamily.

The protein localises to the cell inner membrane. This is an uncharacterized protein from Escherichia coli (strain K12).